A 484-amino-acid polypeptide reads, in one-letter code: UDP-N-acetylmuramate--L-alanine ligase (484 aa).

Position 127–133 (127–133 (GTHGKTT)) interacts with ATP.

Belongs to the MurCDEF family.

Its subcellular location is the cytoplasm. It carries out the reaction UDP-N-acetyl-alpha-D-muramate + L-alanine + ATP = UDP-N-acetyl-alpha-D-muramoyl-L-alanine + ADP + phosphate + H(+). Its pathway is cell wall biogenesis; peptidoglycan biosynthesis. In terms of biological role, cell wall formation. This Shewanella amazonensis (strain ATCC BAA-1098 / SB2B) protein is UDP-N-acetylmuramate--L-alanine ligase.